Here is a 902-residue protein sequence, read N- to C-terminus: Chitin synthase 3 (902 aa).

Residues 1–15 (MAYNRLDDDYFDNRR) are compositionally biased toward basic and acidic residues. The interval 1 to 68 (MAYNRLDDDY…MGPGRHTPSD (68 aa)) is disordered. Pro residues predominate over residues 19–30 (NRPPPHRTPSPG). N-linked (GlcNAc...) asparagine glycosylation is present at asparagine 80. Residues 104-161 (HHDAYYNPTYTPTPNEAQTPYGEPGYEHDGRPLLPQQDSYGQYSDNPQQQQQQQGGLK) are disordered. Composition is skewed to polar residues over residues 111–121 (PTYTPTPNEAQ) and 139–150 (QQDSYGQYSDNP). 9 helical membrane-spanning segments follow: residues 449–469 (SAFG…YIAL), 547–567 (RWLN…YQFF), 577–597 (IAFF…WFAI), 623–643 (ILGV…FVLA), 656–676 (LAMI…AVFI), 699–719 (VVVT…VASL), 731–751 (LVQY…YAFC), 830–850 (VVVL…LSTA), and 874–894 (VVLY…MWFL).

Belongs to the chitin synthase family. Class II subfamily.

It localises to the cell membrane. It carries out the reaction [(1-&gt;4)-N-acetyl-beta-D-glucosaminyl](n) + UDP-N-acetyl-alpha-D-glucosamine = [(1-&gt;4)-N-acetyl-beta-D-glucosaminyl](n+1) + UDP + H(+). In terms of biological role, polymerizes chitin, a structural polymer of the cell wall and septum, by transferring the sugar moiety of UDP-GlcNAc to the non-reducing end of the growing chitin polymer. CHS1 and CHS3 have compensatory functions in cell wall modifications in responses to stresses. Might function as a negative regulator on expression of other CHS genes. This Pyricularia oryzae (strain 70-15 / ATCC MYA-4617 / FGSC 8958) (Rice blast fungus) protein is Chitin synthase 3.